Here is a 226-residue protein sequence, read N- to C-terminus: tRNA (guanine-N(1)-)-methyltransferase (226 aa).

S-adenosyl-L-methionine contacts are provided by residues Gly112 and 132–137; that span reads IGDYVL.

This sequence belongs to the RNA methyltransferase TrmD family. As to quaternary structure, homodimer.

The protein localises to the cytoplasm. The enzyme catalyses guanosine(37) in tRNA + S-adenosyl-L-methionine = N(1)-methylguanosine(37) in tRNA + S-adenosyl-L-homocysteine + H(+). Functionally, specifically methylates guanosine-37 in various tRNAs. The chain is tRNA (guanine-N(1)-)-methyltransferase from Flavobacterium johnsoniae (strain ATCC 17061 / DSM 2064 / JCM 8514 / BCRC 14874 / CCUG 350202 / NBRC 14942 / NCIMB 11054 / UW101) (Cytophaga johnsonae).